We begin with the raw amino-acid sequence, 229 residues long: Putative N-acetylmannosamine-6-phosphate 2-epimerase (229 aa).

Belongs to the NanE family.

It catalyses the reaction an N-acyl-D-glucosamine 6-phosphate = an N-acyl-D-mannosamine 6-phosphate. It participates in amino-sugar metabolism; N-acetylneuraminate degradation; D-fructose 6-phosphate from N-acetylneuraminate: step 3/5. Converts N-acetylmannosamine-6-phosphate (ManNAc-6-P) to N-acetylglucosamine-6-phosphate (GlcNAc-6-P). The chain is Putative N-acetylmannosamine-6-phosphate 2-epimerase from Haemophilus ducreyi (strain 35000HP / ATCC 700724).